We begin with the raw amino-acid sequence, 502 residues long: Glycerol kinase (502 aa).

Threonine 13 contacts ADP. ATP contacts are provided by threonine 13, threonine 14, and serine 15. Threonine 13 provides a ligand contact to sn-glycerol 3-phosphate. Arginine 17 serves as a coordination point for ADP. Positions 83, 84, 136, and 246 each coordinate sn-glycerol 3-phosphate. Glycerol-binding residues include arginine 83, glutamate 84, tyrosine 136, aspartate 246, and glutamine 247. ADP contacts are provided by threonine 268 and glycine 311. ATP contacts are provided by threonine 268, glycine 311, glutamine 315, and glycine 412. ADP contacts are provided by glycine 412 and asparagine 416.

The protein belongs to the FGGY kinase family.

It carries out the reaction glycerol + ATP = sn-glycerol 3-phosphate + ADP + H(+). It participates in polyol metabolism; glycerol degradation via glycerol kinase pathway; sn-glycerol 3-phosphate from glycerol: step 1/1. Its activity is regulated as follows. Inhibited by fructose 1,6-bisphosphate (FBP). Key enzyme in the regulation of glycerol uptake and metabolism. Catalyzes the phosphorylation of glycerol to yield sn-glycerol 3-phosphate. In Francisella tularensis subsp. tularensis (strain WY96-3418), this protein is Glycerol kinase.